Consider the following 881-residue polypeptide: Heat shock protein 70 homolog LHS1 (881 aa).

A signal peptide spans M1 to A20. N-linked (GlcNAc...) asparagine glycans are attached at residues N128, N458, N474, N481, N489, N527, and N844. The segment covering R833–N844 has biased composition (basic and acidic residues). A disordered region spans residues R833–L881. Residues T859–S871 are compositionally biased toward polar residues. Positions S872–L881 are enriched in acidic residues. Positions H878–L881 match the Prevents secretion from ER motif.

It belongs to the heat shock protein 70 family. As to quaternary structure, interacts with the heat shock protein 70 (HSP70) KAR2, and this stimulates nucleotide exchange on KAR2. KAR2 in turn acts to stimulate the ATPase activity of LHS1. Post-translationally, N-glycosylated.

It localises to the endoplasmic reticulum lumen. It catalyses the reaction ATP + H2O = ADP + phosphate + H(+). Chaperone required for protein translocation and folding in the endoplasmic reticulum. The sequence is that of Heat shock protein 70 homolog LHS1 (LHS1) from Saccharomyces cerevisiae (strain ATCC 204508 / S288c) (Baker's yeast).